Reading from the N-terminus, the 1021-residue chain is Outer capsid protein P3 (1021 aa).

It belongs to the phytoreovirus inner capsid protein P3 family. In terms of assembly, homodimer. Homomultimer.

It localises to the virion. Its subcellular location is the host cytoplasm. Its function is as follows. Capsid protein which self-assembles to form the inner icosahedral capsid with a T=2 symmetry, and consisting of 60 P3 dimers. In Nephotettix cincticeps (Green rice leafhopper), this protein is Outer capsid protein P3.